We begin with the raw amino-acid sequence, 170 residues long: Flavodoxin (170 aa).

The Flavodoxin-like domain occupies 4–165 (IGLFYGTQTG…RVKTWVSEIK (162 aa)).

Belongs to the flavodoxin family. Requires FMN as cofactor.

Low-potential electron donor to a number of redox enzymes. The polypeptide is Flavodoxin (isiB) (Synechocystis sp. (strain ATCC 27184 / PCC 6803 / Kazusa)).